Here is a 104-residue protein sequence, read N- to C-terminus: Flagellar hook-basal body complex protein FliE (104 aa).

The protein belongs to the FliE family.

It localises to the bacterial flagellum basal body. The sequence is that of Flagellar hook-basal body complex protein FliE from Salmonella typhi.